The sequence spans 348 residues: Glucokinase (348 aa).

14–19 (GDVGGS) lines the ATP pocket. Residues 327-348 (SDPAPVAAPTHPRGGTAGDMHA) form a disordered region.

This sequence belongs to the bacterial glucokinase family.

It is found in the cytoplasm. It catalyses the reaction D-glucose + ATP = D-glucose 6-phosphate + ADP + H(+). This Chromobacterium violaceum (strain ATCC 12472 / DSM 30191 / JCM 1249 / CCUG 213 / NBRC 12614 / NCIMB 9131 / NCTC 9757 / MK) protein is Glucokinase.